Consider the following 372-residue polypeptide: MQSVIAQAKRIVVKVGSSLVTNDGKGLDYDAIARWAAQIAKLRSIGKEVVLVSSGAIAEGMQRLGWVRRPREIHELQAAAAVGQMGLAQVYESQFGRYGIRTAQVLLTHADLADRERYLNARSTLLTLLSLGVVPIINENDTVVTDEIKFGDNDTLGALVTNLIEGDALVILTDQRGLYTADPRKDPNAEFVDEALAGTPELEQMAGGAGTSIGRGGMLTKILAAKRAAKSGAHTTIASGREANVLERLAAGEAIGTQLLAPTGRLTARKQWMADHLQLRGRVVIDAGAVEKLTSGGKSLLPIGVVEVQGEFARGEVIACVGADGREVARGITNYSSAEARLIARKPSSEIESVLGHLNEPELIHRDNLVLV.

Lys14 is a binding site for ATP. Ser54, Asp141, and Asn153 together coordinate substrate. An ATP-binding site is contributed by 173-174 (TD). The region spanning 280–358 (RGRVVIDAGA…SEIESVLGHL (79 aa)) is the PUA domain.

Belongs to the glutamate 5-kinase family.

The protein resides in the cytoplasm. The enzyme catalyses L-glutamate + ATP = L-glutamyl 5-phosphate + ADP. It functions in the pathway amino-acid biosynthesis; L-proline biosynthesis; L-glutamate 5-semialdehyde from L-glutamate: step 1/2. Its function is as follows. Catalyzes the transfer of a phosphate group to glutamate to form L-glutamate 5-phosphate. The sequence is that of Glutamate 5-kinase from Cupriavidus pinatubonensis (strain JMP 134 / LMG 1197) (Cupriavidus necator (strain JMP 134)).